Here is a 212-residue protein sequence, read N- to C-terminus: RNA chaperone ProQ (212 aa).

Basic and acidic residues-rich tracts occupy residues 102–124 (ALKE…EKAK) and 132–144 (RKAD…DKPK). Residues 102–149 (ALKESKERVFASRRTNTKEEKAKQPRRPAPRKADAAAKSDKPKAAPKA) form a disordered region.

It belongs to the ProQ family.

It is found in the cytoplasm. In terms of biological role, RNA chaperone with significant RNA binding, RNA strand exchange and RNA duplexing activities. The chain is RNA chaperone ProQ from Aeromonas hydrophila subsp. hydrophila (strain ATCC 7966 / DSM 30187 / BCRC 13018 / CCUG 14551 / JCM 1027 / KCTC 2358 / NCIMB 9240 / NCTC 8049).